The following is a 765-amino-acid chain: Protein transport protein Sec23A (765 aa).

Thr2 is subject to N-acetylthreonine. Zn(2+) is bound by residues Cys61, Cys66, Cys85, and Cys88. The residue at position 308 (Thr308) is a Phosphothreonine. One copy of the Gelsolin-like repeat lies at 632–718 (PEPVLLDSSS…EHGGSQARFL (87 aa)).

The protein belongs to the SEC23/SEC24 family. SEC23 subfamily. COPII is composed of at least five proteins: the Sec23/24 complex, the Sec13/31 complex and Sar1. Interacts with SEC23IP. Interacts with HTR4. Interacts with SEC16A. Interacts with SLC6A4. Interacts (as part of the Sec23/24 complex) with SEC22B; recruits SEC22B into COPII-coated vesicles and allows the transport of this cargo from the endoplasmic reticulum to the Golgi. Interacts (via Gelsolin-like repeat) with MIA2 and MIA3; specifically involved in the transport of large cargos like the collagen COL7A1. Interacts with DDHD1. Interacts with TMEM39A. Interacts with SACM1L; this interaction is reduced in the absence of TMEM39A. Interacts with kinase FAM20C; transport of FAM20C from the endoplasmic reticulum to the Golgi is likely to be mediated by COPII vesicles. As to expression, high levels in brain and fibroblasts.

Its subcellular location is the cytoplasmic vesicle. It localises to the COPII-coated vesicle membrane. The protein resides in the endoplasmic reticulum membrane. The protein localises to the cytoplasm. It is found in the cytosol. Functionally, component of the coat protein complex II (COPII) which promotes the formation of transport vesicles from the endoplasmic reticulum (ER). The coat has two main functions, the physical deformation of the endoplasmic reticulum membrane into vesicles and the selection of cargo molecules for their transport to the Golgi complex. Required for the translocation of insulin-induced glucose transporter SLC2A4/GLUT4 to the cell membrane. The sequence is that of Protein transport protein Sec23A from Mus musculus (Mouse).